Consider the following 401-residue polypeptide: Phosrestin-1 (401 aa).

The protein belongs to the arrestin family.

Functionally, directly interacts with light-activated rhodopsin thereby activating the phosphorylation of metarhodopsin. Inhibits the dephosphorylation of metarhodopsin. The chain is Phosrestin-1 (ARR2) from Calliphora vicina (Blue blowfly).